We begin with the raw amino-acid sequence, 376 residues long: tRNA pseudouridine synthase C (376 aa).

Residue Asp168 is part of the active site.

In the C-terminal section; belongs to the pseudouridine synthase RluA family. It to E.coli YqcC in the N-terminal section.

It catalyses the reaction uridine(65) in tRNA = pseudouridine(65) in tRNA. In terms of biological role, responsible for synthesis of pseudouridine from uracil-65 in transfer RNAs. The polypeptide is tRNA pseudouridine synthase C (truC) (Pectobacterium carotovorum subsp. carotovorum (Erwinia carotovora subsp. carotovora)).